Reading from the N-terminus, the 491-residue chain is Mitochondrial distribution and morphology protein 12 (491 aa).

One can recognise an SMP-LTD domain in the interval 1-491; that stretch reads MSIDLNWEAA…VFPSYWTFLV (491 aa). Positions 72–82 are enriched in acidic residues; the sequence is ESDSSEDEDGE. Disordered stretches follow at residues 72-123, 201-313, and 389-434; these read ESDS…NHHD, GWPD…MRER, and GDED…QPRR. Basic and acidic residues-rich tracts occupy residues 83-123 and 213-229; these read GHDA…NHHD and MTDH…HNKN. Over residues 230–249 the composition is skewed to polar residues; that stretch reads ETGSPSRPSTAHTNPTQLSH. Positions 252-262 are enriched in low complexity; the sequence is SAASSSNNTSN. Positions 270–279 are enriched in polar residues; that stretch reads DHTSSTTATT. Over residues 400 to 421 the composition is skewed to low complexity; sequence STANTTTAASGSSTDNNNNNNE.

It belongs to the MDM12 family. As to quaternary structure, component of the ER-mitochondria encounter structure (ERMES) or MDM complex, composed of mmm1, mdm10, mdm12 and mdm34. A mmm1 homodimer associates with one molecule of mdm12 on each side in a pairwise head-to-tail manner, and the SMP-LTD domains of mmm1 and mdm12 generate a continuous hydrophobic tunnel for phospholipid trafficking.

It is found in the mitochondrion outer membrane. The protein localises to the endoplasmic reticulum membrane. Its function is as follows. Component of the ERMES/MDM complex, which serves as a molecular tether to connect the endoplasmic reticulum (ER) and mitochondria. Components of this complex are involved in the control of mitochondrial shape and protein biogenesis, and function in nonvesicular lipid trafficking between the ER and mitochondria. Mdm12 is required for the interaction of the ER-resident membrane protein mmm1 and the outer mitochondrial membrane-resident beta-barrel protein mdm10. The mdm12-mmm1 subcomplex functions in the major beta-barrel assembly pathway that is responsible for biogenesis of all mitochondrial outer membrane beta-barrel proteins, and acts in a late step after the SAM complex. The mdm10-mdm12-mmm1 subcomplex further acts in the TOM40-specific pathway after the action of the mdm12-mmm1 complex. Essential for establishing and maintaining the structure of mitochondria and maintenance of mtDNA nucleoids. The chain is Mitochondrial distribution and morphology protein 12 from Talaromyces stipitatus (strain ATCC 10500 / CBS 375.48 / QM 6759 / NRRL 1006) (Penicillium stipitatum).